The sequence spans 224 residues: Homeobox protein Hox-B6 (224 aa).

The Antp-type hexapeptide signature appears at 127–132 (VYPWMQ). The homeobox DNA-binding region spans 146-205 (GRRGRQTYTRYQTLELEKEFHYNRYLTRRRRIEIAHALCLTERQIKIWFQNRRMKWKKES). Position 214 is a phosphoserine (Ser214).

This sequence belongs to the Antp homeobox family.

It localises to the nucleus. In terms of biological role, sequence-specific transcription factor which is part of a developmental regulatory system that provides cells with specific positional identities on the anterior-posterior axis. This Homo sapiens (Human) protein is Homeobox protein Hox-B6 (HOXB6).